The following is a 476-amino-acid chain: ATP synthase subunit beta (476 aa).

161–168 contributes to the ATP binding site; it reads GGAGVGKT.

This sequence belongs to the ATPase alpha/beta chains family. In terms of assembly, F-type ATPases have 2 components, CF(1) - the catalytic core - and CF(0) - the membrane proton channel. CF(1) has five subunits: alpha(3), beta(3), gamma(1), delta(1), epsilon(1). CF(0) has three main subunits: a(1), b(2) and c(9-12). The alpha and beta chains form an alternating ring which encloses part of the gamma chain. CF(1) is attached to CF(0) by a central stalk formed by the gamma and epsilon chains, while a peripheral stalk is formed by the delta and b chains.

The protein localises to the cell membrane. The catalysed reaction is ATP + H2O + 4 H(+)(in) = ADP + phosphate + 5 H(+)(out). Its function is as follows. Produces ATP from ADP in the presence of a proton gradient across the membrane. The catalytic sites are hosted primarily by the beta subunits. This Mycolicibacterium gilvum (strain PYR-GCK) (Mycobacterium gilvum (strain PYR-GCK)) protein is ATP synthase subunit beta.